Here is a 273-residue protein sequence, read N- to C-terminus: Fos-related antigen 1 (273 aa).

Disordered stretches follow at residues 1-46 (MYRD…IDSS) and 60-114 (GPTG…RRER). A compositionally biased stretch (low complexity) spans 7-35 (EPGPSSGAGSPYGRPAQPPQAQAQTAQQQ). In terms of domain architecture, bZIP spans 105–168 (EERRRVRRER…ERLELVLEAH (64 aa)). The basic motif stretch occupies residues 107–127 (RRRVRRERNKLAAAKCRNRRK). Positions 133 to 161 (LQAETDKLEDEKSGLQREIEELQKQKERL) are leucine-zipper. Residues 169-182 (RPICKIPEGDKKDP) are compositionally biased toward basic and acidic residues. The disordered stretch occupies residues 169–273 (RPICKIPEGD…PLGSPTLLAL (105 aa)). Composition is skewed to low complexity over residues 217–235 (LHTPTLMTTPSLTPFTPSL) and 254–273 (SSSSGDPSSDPLGSPTLLAL). S267 carries the phosphoserine modification.

The protein belongs to the bZIP family. Fos subfamily. As to quaternary structure, heterodimer. Interacts with the BAF multiprotein chromatin-remodeling complex subunits SMARCB1 and SMARCD1. Interacts with ARID1A and JUN.

It localises to the nucleus. The polypeptide is Fos-related antigen 1 (Fosl1) (Mus musculus (Mouse)).